A 147-amino-acid chain; its full sequence is Large ribosomal subunit protein bL9 (147 aa).

This sequence belongs to the bacterial ribosomal protein bL9 family.

Functionally, binds to the 23S rRNA. This is Large ribosomal subunit protein bL9 from Shouchella clausii (strain KSM-K16) (Alkalihalobacillus clausii).